A 241-amino-acid chain; its full sequence is Beta-nerve growth factor (241 aa).

An N-terminal signal peptide occupies residues 1–18 (MSMLFYTLITAFLIGVQA). The propeptide occupies 19–121 (EPYTDSNVPE…SFNRTHRSKR (103 aa)). Asn-69, Asn-114, and Asn-166 each carry an N-linked (GlcNAc...) asparagine glycan. 3 cysteine pairs are disulfide-bonded: Cys-136/Cys-201, Cys-179/Cys-229, and Cys-189/Cys-231. Residues Tyr-173 and Lys-209 each coordinate a 1-acyl-sn-glycero-3-phospho-(1D-myo-inositol). An a 1-acyl-sn-glycero-3-phospho-L-serine-binding site is contributed by Lys-209.

This sequence belongs to the NGF-beta family. Homodimer. The homodimer interacts with a single NTRK1 chain. The homodimer interacts with a single NGFR chain. The NGF dimer interacts with a single SORCS2 chain (via extracellular domain). The NGF precursor (proNGF) binds to a receptor complex formed by SORT1 and NGFR, which leads to NGF endocytosis. Both mature NGF and the immature NGF precursor (proNGF) interact with SORCS2 and with the heterodimer formed by SORCS2 and NGFR (via extracellular domains). The NGF precursor (proNGF) has much higher affinity for SORCS2 than mature NGF. The NGF precursor (proNGF) has much higher affinity for SORT1 than mature NGF. Interacts with ADAM10 in a divalent cation-dependent manner. Interacts with SORCS3. As to expression, detected in the granule and pyramidal cell layer in the hippocampus.

The protein localises to the secreted. It is found in the endosome lumen. Functionally, nerve growth factor is important for the development and maintenance of the sympathetic and sensory nervous systems. Extracellular ligand for the NTRK1 and NGFR receptors, activates cellular signaling cascades to regulate neuronal proliferation, differentiation and survival. The immature NGF precursor (proNGF) functions as a ligand for the heterodimeric receptor formed by SORCS2 and NGFR, and activates cellular signaling cascades that lead to inactivation of RAC1 and/or RAC2, reorganization of the actin cytoskeleton and neuronal growth cone collapse. In contrast to mature NGF, the precursor form (proNGF) promotes neuronal apoptosis (in vitro). Inhibits metalloproteinase-dependent proteolysis of platelet glycoprotein VI. Binds lysophosphatidylinositol and lysophosphatidylserine between the two chains of the homodimer. The lipid-bound form promotes histamine relase from mast cells, contrary to the lipid-free form. The polypeptide is Beta-nerve growth factor (Ngf) (Rattus norvegicus (Rat)).